Reading from the N-terminus, the 340-residue chain is Holliday junction branch migration complex subunit RuvB (340 aa).

The segment at 1–184 (MNENLDPTTK…FGISSRLQYY (184 aa)) is large ATPase domain (RuvB-L). Residues Leu-23, Arg-24, Gly-65, Lys-68, Thr-69, Thr-70, 131 to 133 (EDF), Arg-174, Tyr-184, and Arg-221 each bind ATP. Thr-69 contributes to the Mg(2+) binding site. The tract at residues 185 to 255 (STELLTTIVE…ISKYALKALN (71 aa)) is small ATPAse domain (RuvB-S). Residues 258–340 (AHGLDEMDNK…INTNIQGGLF (83 aa)) form a head domain (RuvB-H) region. DNA contacts are provided by Arg-313 and Arg-318.

This sequence belongs to the RuvB family. As to quaternary structure, homohexamer. Forms an RuvA(8)-RuvB(12)-Holliday junction (HJ) complex. HJ DNA is sandwiched between 2 RuvA tetramers; dsDNA enters through RuvA and exits via RuvB. An RuvB hexamer assembles on each DNA strand where it exits the tetramer. Each RuvB hexamer is contacted by two RuvA subunits (via domain III) on 2 adjacent RuvB subunits; this complex drives branch migration. In the full resolvosome a probable DNA-RuvA(4)-RuvB(12)-RuvC(2) complex forms which resolves the HJ.

It localises to the cytoplasm. It catalyses the reaction ATP + H2O = ADP + phosphate + H(+). Functionally, the RuvA-RuvB-RuvC complex processes Holliday junction (HJ) DNA during genetic recombination and DNA repair, while the RuvA-RuvB complex plays an important role in the rescue of blocked DNA replication forks via replication fork reversal (RFR). RuvA specifically binds to HJ cruciform DNA, conferring on it an open structure. The RuvB hexamer acts as an ATP-dependent pump, pulling dsDNA into and through the RuvAB complex. RuvB forms 2 homohexamers on either side of HJ DNA bound by 1 or 2 RuvA tetramers; 4 subunits per hexamer contact DNA at a time. Coordinated motions by a converter formed by DNA-disengaged RuvB subunits stimulates ATP hydrolysis and nucleotide exchange. Immobilization of the converter enables RuvB to convert the ATP-contained energy into a lever motion, pulling 2 nucleotides of DNA out of the RuvA tetramer per ATP hydrolyzed, thus driving DNA branch migration. The RuvB motors rotate together with the DNA substrate, which together with the progressing nucleotide cycle form the mechanistic basis for DNA recombination by continuous HJ branch migration. Branch migration allows RuvC to scan DNA until it finds its consensus sequence, where it cleaves and resolves cruciform DNA. The protein is Holliday junction branch migration complex subunit RuvB of Flavobacterium johnsoniae (strain ATCC 17061 / DSM 2064 / JCM 8514 / BCRC 14874 / CCUG 350202 / NBRC 14942 / NCIMB 11054 / UW101) (Cytophaga johnsonae).